The chain runs to 189 residues: Ribosome hibernation promotion factor (189 aa).

It belongs to the HPF/YfiA ribosome-associated protein family. Long HPF subfamily. In terms of assembly, interacts with 100S ribosomes. Not associated with 70S ribosome monomers, about 1 monomer per ribosome.

Its subcellular location is the cytoplasm. Required for dimerization of active 70S ribosomes into 100S ribosomes in stationary phase; 100S ribosomes are translationally inactive and sometimes present during exponential growth. May not be the only factor implicated. Might negatively regulate the activity of the sigma-54 factor (SigL). This Bacillus subtilis (strain 168) protein is Ribosome hibernation promotion factor (yvyD).